We begin with the raw amino-acid sequence, 792 residues long: MALHNPQYIFGDFSPDEFNQFFVTPRSSVELPPYSGTLCSIQAEDELPDGQEHQRIEFGVDEVIEPSEGLPPTPSYSISSTLNPQAPEFILGCTTSKKIPEAVEKDETYSSIDQYPASALALESNSNAEAETLENDSGAGGLGQRERKKKKKRPPGYYSYLKDGGEDSASPATLVNGHATSVGTSGEAVEDAEFMDVLPPVMPRTCDSPQNPVDFISGPVPDSPFPRTLGGDARTAGLCEGCHEADFEQPCLPADSLLRTAGTQPYVGTDTTENFAVANGKILESPGEDTAANGAELHTDEGADLDPAKPESQSPPAESALSASGAIPISQPAKSWASLFHDSKPSASSPMAYVETKCSPPVPSPLASEKQMEVKEGLVPVSEDPVAIKIAELLETVTLIHKPVSLQPRGLINKGNWCYINATLQALVACPPMYHLMKFIPLYSKVQRPCTSTPMIDSFVRLMNEFTNMPVPPKPRQALGDKIVRDIRPGAAFEPTYIYRLLTVIKSSLSEKGRQEDAEEYLGFILNGLHEEMLSLKKLLSPTHEKHSVSNGPRSDLIEDEELEDTGKGSEDEWEQVGPKNKTSITRQADFVQTPITGIFGGHIRSVVYQQSSKESATLQLFFTLQLDIQSDKIRTVQDALESLVARESVQGYTTKTKQEVEVSRRVTLEKLPPVLVLHLKRFVYEKTGGCQKLVKNIDYPVDLEISRELLSPGIKNKNFKCQRTYRLFAVVYHHGNSATGGHYTTDVFQIGLNGWLRIDDQTVKVINQYQVVKPPADRTAYLLYYRRVDLL.

Ala-2 is subject to N-acetylalanine. The segment at Ala-2–Ile-99 is interaction with p53/TP53. The interval Pro-6–Phe-21 is G3BP1-binding. Thr-24 carries the post-translational modification Phosphothreonine. Positions Ser-126 to Gly-164 are disordered. Phosphoserine is present on residues Ser-208 and Ser-223. Over residues Asp-300–Lys-309 the composition is skewed to basic and acidic residues. The disordered stretch occupies residues Asp-300–Ala-323. Position 314 is a phosphoserine (Ser-314). The residue at position 330 (Ser-330) is a Phosphoserine; by ATM. Residues Pro-350–Glu-369 form a disordered region. A phosphoserine mark is found at Ser-359 and Ser-364. The region spanning Arg-409–Val-789 is the USP domain. Cys-418 serves as the catalytic Nucleophile. Ser-541 bears the Phosphoserine mark. The interval Pro-542–Lys-580 is disordered. Residue Thr-566 is modified to Phosphothreonine. Phosphoserine is present on Ser-570. The active-site Proton acceptor is His-743.

It belongs to the peptidase C19 family. USP10 subfamily. As to quaternary structure, found in a deubiquitination complex with TANK, USP10 and ZC3H12A; this complex inhibits genotoxic stress- or interleukin-1-beta (IL1B)-mediated NF-kappa-B activation by promoting IKBKG or TRAF6 deubiquitination. Interacts with IKBKG; this interaction increases in response to DNA damage. Interacts with TANK; this interaction increases in response to DNA damage. Interacts with TRAF6; this interaction increases in response to DNA damage. Interacts with ZC3H12A; this interaction increases in response to DNA damage. Interacts with G3BP1 (via NTF2 domain) and G3BP2 (via NTF2 domain); inhibiting stress granule formation. Post-translationally, phosphorylated by ATM following DNA damage, leading to stabilization and translocation it to the nucleus. In terms of processing, ubiquitinated. Deubiquitinated by USP13.

It is found in the cytoplasm. It localises to the nucleus. Its subcellular location is the early endosome. It catalyses the reaction Thiol-dependent hydrolysis of ester, thioester, amide, peptide and isopeptide bonds formed by the C-terminal Gly of ubiquitin (a 76-residue protein attached to proteins as an intracellular targeting signal).. With respect to regulation, specifically inhibited by spautin-1 (specific and potent autophagy inhibitor-1), a derivative of MBCQ that binds to USP10 and inhibits deubiquitinase activity. Regulated by PIK3C3/VPS34-containing complexes. Functionally, hydrolase that can remove conjugated ubiquitin from target proteins such as p53/TP53, RPS2/us5, RPS3/us3, RPS10/eS10, BECN1, SNX3 and CFTR. Acts as an essential regulator of p53/TP53 stability: in unstressed cells, specifically deubiquitinates p53/TP53 in the cytoplasm, leading to counteract MDM2 action and stabilize p53/TP53. Following DNA damage, translocates to the nucleus and deubiquitinates p53/TP53, leading to regulate the p53/TP53-dependent DNA damage response. Component of a regulatory loop that controls autophagy and p53/TP53 levels: mediates deubiquitination of BECN1, a key regulator of autophagy, leading to stabilize the PIK3C3/VPS34-containing complexes. In turn, PIK3C3/VPS34-containing complexes regulate USP10 stability, suggesting the existence of a regulatory system by which PIK3C3/VPS34-containing complexes regulate p53/TP53 protein levels via USP10 and USP13. Does not deubiquitinate MDM2. Plays a key role in 40S ribosome subunit recycling when a ribosome has stalled during translation: acts both by inhibiting formation of stress granules, which store stalled translation pre-initiation complexes, and mediating deubiquitination of 40S ribosome subunits. Acts as a negative regulator of stress granules formation by lowering G3BP1 and G3BP2 valence, thereby preventing G3BP1 and G3BP2 ability to undergo liquid-liquid phase separation (LLPS) and assembly of stress granules. Promotes 40S ribosome subunit recycling following ribosome dissociation in response to ribosome stalling by mediating deubiquitination of 40S ribosomal proteins RPS2/us5, RPS3/us3 and RPS10/eS10, thereby preventing their degradation by the proteasome. Part of a ribosome quality control that takes place when ribosomes have stalled during translation initiation (iRQC): USP10 acts by removing monoubiquitination of RPS2/us5 and RPS3/us3, promoting 40S ribosomal subunit recycling. Deubiquitinates CFTR in early endosomes, enhancing its endocytic recycling. Involved in a TANK-dependent negative feedback response to attenuate NF-kappa-B activation via deubiquitinating IKBKG or TRAF6 in response to interleukin-1-beta (IL1B) stimulation or upon DNA damage. Deubiquitinates TBX21 leading to its stabilization. Plays a negative role in the RLR signaling pathway upon RNA virus infection by blocking the RIGI-mediated MAVS activation. Mechanistically, removes the unanchored 'Lys-63'-linked polyubiquitin chains of MAVS to inhibit its aggregation, essential for its activation. This is Ubiquitin carboxyl-terminal hydrolase 10 (Usp10) from Mus musculus (Mouse).